A 316-amino-acid polypeptide reads, in one-letter code: Small ribosomal subunit protein mS26 (316 aa).

A disordered region spans residues 41–71; sequence TTRSARDSVSIPPDSPNYIKVPEPPQSSEVR.

It belongs to the mitochondrion-specific ribosomal protein mS26 family. Component of the mitochondrial small ribosomal subunit (mt-SSU). Mature N.crassa 74S mitochondrial ribosomes consist of a small (37S) and a large (54S) subunit. The 37S small subunit contains a 16S ribosomal RNA (16S mt-rRNA) and 32 different proteins. The 54S large subunit contains a 23S rRNA (23S mt-rRNA) and 42 different proteins.

It is found in the mitochondrion. Its function is as follows. Component of the mitochondrial ribosome (mitoribosome), a dedicated translation machinery responsible for the synthesis of mitochondrial genome-encoded proteins, including at least some of the essential transmembrane subunits of the mitochondrial respiratory chain. The mitoribosomes are attached to the mitochondrial inner membrane and translation products are cotranslationally integrated into the membrane. This Neurospora crassa (strain ATCC 24698 / 74-OR23-1A / CBS 708.71 / DSM 1257 / FGSC 987) protein is Small ribosomal subunit protein mS26 (pet123).